We begin with the raw amino-acid sequence, 397 residues long: Phosphoglycerate kinase (397 aa).

Substrate-binding positions include 26-28 (DLN), arginine 42, 65-68 (HLGR), arginine 119, and arginine 152. ATP-binding positions include lysine 203, glutamate 325, and 351-354 (GGDT).

Belongs to the phosphoglycerate kinase family. In terms of assembly, monomer.

The protein resides in the cytoplasm. The catalysed reaction is (2R)-3-phosphoglycerate + ATP = (2R)-3-phospho-glyceroyl phosphate + ADP. The protein operates within carbohydrate degradation; glycolysis; pyruvate from D-glyceraldehyde 3-phosphate: step 2/5. The sequence is that of Phosphoglycerate kinase from Bordetella pertussis (strain Tohama I / ATCC BAA-589 / NCTC 13251).